The sequence spans 951 residues: Protein inturned (951 aa).

3 disordered regions span residues 1–32 (MEHS…FSSS), 189–208 (SSRN…NQRL), and 687–765 (TPKR…GGSG). Residues 187-269 (HQSSRNSKRS…PMQLKLTFET (83 aa)) form the PDZ domain. Low complexity predominate over residues 715-726 (PTRSSGGSDSGT). The span at 743–752 (MARKFGRRES) shows a compositional bias: basic and acidic residues. Gly residues predominate over residues 754 to 765 (GSGGSDGSGGSG).

It belongs to the inturned family. As to quaternary structure, interacts with fuz and wdpcp; fuz, intu and wdpcp probably form the core CPLANE (ciliogenesis and planar polarity effectors) complex. As to expression, expressed in the neural plate during neural tube closure with subsequent strong expression in the ventral neural tube and in facial mesenchyme.

It localises to the cell surface. The protein resides in the cell membrane. Its subcellular location is the cytoplasm. The protein localises to the cytoskeleton. It is found in the cilium basal body. Plays a role in the definition of cell polarity via the planar cell polarity (PCP) cascade. Required for ciliogenesis by controlling the organization of the apical actin cytoskeleton and the positioning of the basal bodies at the apical cell surface, which in turn is essential for the normal orientation of elongating ciliary microtubules. Proposed to function as core component of a functional module called CPLANE (ciliogenesis and planar polarity effectors) involved in recruitment of peripheral IFT-A proteins to basal bodies. Controls the localization of both rhoa and disheveled in multi-ciliated cells. Has an indirect effect on hedgehog signaling. This is Protein inturned from Xenopus laevis (African clawed frog).